Here is a 498-residue protein sequence, read N- to C-terminus: MLSRSARCSRAVLFSAKRSLASQANTGANASANQVMVSKHVQDIDPEMYDILTKERKRQKHSITLIPSENFTSKSVMDLLGSEMQNKYSEGYPGERYYGGNQFIDMAESLCQKRALELYNLDPQLWGVNVQPLSGAPANLYAYSAVMETNDRLMGLDLPHGGHLSHGYQLPSGTKISYISKYFQTMPYHVDSQTGIIDYDFLSKTSKLFRPKVIVAGASAYSRVLDYKRFKEIADACGAYLMSDMAHISGLVAAGVTRSPFEYSDIVTTTTHKSLRGPRGAMIFYRKGVRKVTKKGKEVLYDLDKRINFSVFPGHQGGPHNHTISALAVALKQAATPEFKEYQAAVVENARIFGEELVKKGFELVSGGTDTHLILINLSNLGIDGARLETLLENINIAANKNTIPGDKSALFPSGLRVGTPAMTTRGFGPQEFAQVAAYIDRAVKLAIGIKSQESPDAKDARSKLASFKELCKESDQVKQLADEVYQWVGEFPVPGEL.

An N6-(pyridoxal phosphate)lysine modification is found at Lys273.

Belongs to the SHMT family. Homotetramer. The cofactor is pyridoxal 5'-phosphate.

The protein localises to the mitochondrion. The catalysed reaction is (6R)-5,10-methylene-5,6,7,8-tetrahydrofolate + glycine + H2O = (6S)-5,6,7,8-tetrahydrofolate + L-serine. Its pathway is one-carbon metabolism; tetrahydrofolate interconversion. Functionally, interconversion of serine and glycine. The polypeptide is Serine hydroxymethyltransferase, mitochondrial (SHM1) (Kluyveromyces lactis (strain ATCC 8585 / CBS 2359 / DSM 70799 / NBRC 1267 / NRRL Y-1140 / WM37) (Yeast)).